The sequence spans 348 residues: Histidinol-phosphate aminotransferase (348 aa).

Residue K210 is modified to N6-(pyridoxal phosphate)lysine.

This sequence belongs to the class-II pyridoxal-phosphate-dependent aminotransferase family. Histidinol-phosphate aminotransferase subfamily. Homodimer. The cofactor is pyridoxal 5'-phosphate.

The enzyme catalyses L-histidinol phosphate + 2-oxoglutarate = 3-(imidazol-4-yl)-2-oxopropyl phosphate + L-glutamate. The protein operates within amino-acid biosynthesis; L-histidine biosynthesis; L-histidine from 5-phospho-alpha-D-ribose 1-diphosphate: step 7/9. The protein is Histidinol-phosphate aminotransferase of Pseudomonas putida (strain ATCC 47054 / DSM 6125 / CFBP 8728 / NCIMB 11950 / KT2440).